The chain runs to 95 residues: Large ribosomal subunit protein uL23 (95 aa).

Belongs to the universal ribosomal protein uL23 family. As to quaternary structure, part of the 50S ribosomal subunit. Contacts protein L29, and trigger factor when it is bound to the ribosome.

Its function is as follows. One of the early assembly proteins it binds 23S rRNA. One of the proteins that surrounds the polypeptide exit tunnel on the outside of the ribosome. Forms the main docking site for trigger factor binding to the ribosome. This is Large ribosomal subunit protein uL23 from Desulforudis audaxviator (strain MP104C).